Reading from the N-terminus, the 484-residue chain is Arginine ADP-riboxanase OspC3 (484 aa).

Histidine 143, glutamine 144, serine 145, asparagine 155, lysine 157, threonine 169, asparagine 172, and threonine 173 together coordinate NAD(+). Residue glutamate 326 is part of the active site. ANK repeat units follow at residues 369–398 (MAHQ…FTKQ), 413–444 (NLYD…DVNK), and 451–480 (SGDT…ILGK).

This sequence belongs to the OspC family. As to quaternary structure, interacts with host calmodulin (CALM1, CALM2 and/or CALM3); specifically interacts with the apo form of calmodulin, preventing calcium-binding.

The protein resides in the secreted. Its subcellular location is the host cytoplasm. It catalyses the reaction L-arginyl-[protein] + NAD(+) = ADP-riboxanated L-argininyl-[protein] + nicotinamide + NH4(+) + H(+). With respect to regulation, interaction with host calmodulin (CALM1, CALM2 and/or CALM3) is required to mediate arginine ADP-riboxanation of host caspases. In terms of biological role, ADP-riboxanase effector that inhibits host cell pyroptosis. Acts by mediating arginine ADP-riboxanation of host CASP4/CASP11, blocking CASP4/CASP11 autoprocessing. This prevents CASP4 activation and ability to recognize and cleave GSDMD, thereby inhibiting LPS-induced pyroptosis. ADP-riboxanation takes place in two steps: OspC3 first catalyzes ADP-ribosylation of target Arg, and then initiates a deamination to remove one N-omega group. Independently of its ADP-riboxanase activity, acts as an inhibitor of calcium signaling by inhibiting host calmodulin, preventing activation of the JAK-STAT signaling pathway in response to interferon-beta. Mechanistically, acts by binding to the apo form of calmodulin, preventing calcium-binding and ability to activate host CaMK2 (CAMKII), which is required to stimulate the JAK-STAT signaling pathway in response to interferon-beta. The chain is Arginine ADP-riboxanase OspC3 from Shigella flexneri.